The sequence spans 415 residues: Thylakoid ADP,ATP carrier protein, chloroplastic (415 aa).

A chloroplast-targeting transit peptide spans 1 to 61 (MGEEKSLLQF…NFASLSVAIR (61 aa)). 5 helical membrane-spanning segments follow: residues 106 to 126 (IALL…AFAG), 182 to 207 (LPQV…KLFR), 219 to 239 (LGAG…LDVL), 273 to 293 (GPSL…FDLV), and 309 to 329 (LLTA…LDTI). Solcar repeat units lie at residues 113–205 (PKDA…YKKL), 213–296 (LSVL…VKKS), and 307–387 (SSLL…VKKL). Arginine 187 is an ADP binding site. Arginine 330 provides a ligand contact to ADP. A helical membrane pass occupies residues 362–388 (GFVPNALKSMPNSSIKLTTFDIVKKLI).

Belongs to the mitochondrial carrier (TC 2.A.29) family. Highly expressed in developing photosynthetic organs such as leaves, flower buds and green siliques. Also detected in roots, flowers, mature leaves and stems.

The protein localises to the plastid. The protein resides in the chloroplast thylakoid membrane. It is found in the chloroplast envelope. With respect to regulation, KM and Vmax values toward ATP only are increased by m-chlorocarbonyl cyanide phenylhydrazone (CCCP). The corresponding values for ADP are not affected. Specifically transports adenine nucleotides. Involved in the uptake of ATP into thylakoids in exchange for lumenal ADP. This Arabidopsis thaliana (Mouse-ear cress) protein is Thylakoid ADP,ATP carrier protein, chloroplastic (TAAC).